The primary structure comprises 819 residues: Myosin light chain kinase 3 (819 aa).

Disordered stretches follow at residues 146 to 256 (VPWR…TPSE), 273 to 334 (VVSP…TPPR), and 347 to 462 (EMLM…EQDC). Ser-152 carries the phosphoserine modification. 2 stretches are compositionally biased toward basic and acidic residues: residues 158-170 (EENK…EGGK) and 183-196 (DARE…KADV). Over residues 307 to 318 (GPGPQCPGPPGL) the composition is skewed to pro residues. Phosphoserine is present on residues Ser-355, Ser-401, and Ser-408. The 256-residue stretch at 515 to 770 (VCQHEVLGGG…ATQCLKHEWL (256 aa)) folds into the Protein kinase domain. Residues 521–529 (LGGGRFGQV) and Lys-544 contribute to the ATP site. The active-site Proton acceptor is Asp-636.

Belongs to the protein kinase superfamily. CAMK Ser/Thr protein kinase family. The cofactor is Mg(2+). Post-translationally, phosphorylated on serine residues. Restricted to heart.

It is found in the cytoplasm. It catalyses the reaction L-seryl-[myosin light chain] + ATP = O-phospho-L-seryl-[myosin light chain] + ADP + H(+). The catalysed reaction is L-threonyl-[myosin light chain] + ATP = O-phospho-L-threonyl-[myosin light chain] + ADP + H(+). Kinase that phosphorylates MYL2 in vitro. Promotes sarcomere formation in cardiomyocytes and increases cardiomyocyte contractility. This chain is Myosin light chain kinase 3 (MYLK3), found in Homo sapiens (Human).